The sequence spans 293 residues: Protease HtpX homolog (293 aa).

Helical transmembrane passes span 7–26 (ASLL…ALLG) and 30–49 (GMVM…WYYS). Residue histidine 131 coordinates Zn(2+). The active site involves glutamate 132. A Zn(2+)-binding site is contributed by histidine 135. 2 helical membrane passes run 148–168 (ATLA…FWFF) and 180–200 (IGAL…QLGI). Glutamate 205 is a binding site for Zn(2+).

It belongs to the peptidase M48B family. Zn(2+) serves as cofactor.

Its subcellular location is the cell inner membrane. The protein is Protease HtpX homolog of Acaryochloris marina (strain MBIC 11017).